Here is an 856-residue protein sequence, read N- to C-terminus: MNVIDTDDLEKHTPMMRQYLTMKAEHHDMLLFYRMGDFYELFYDDAKRASELLGISLTARGKSGGDPIPMAGLPYHAVEGYLAKLVQIGQSVAICEQIGDPATSKGPVERKVVRIVTPGTLTDEALLQERQDNLLAAVYQGKIGFGYATLDVSSGRFVIAELDTRESLEAELQRTNPVEILYSEDFGELGLLNGFKGKRRRPEWEFDYDTSIKLLLAQFGTKDLHGFGIADARLSLQAAGCLMQYVKDTQRTALPHINAITRFNQTDSIVLDAATRRNLELTQNLAGGRDNTLAAVLDNTATPMGSRILQRWIHQPLRDPKHIQARQQAVTELLDTAAHEGLHEQLKALGDIERIMARLALRTARPRDFARLRQALGLLPELQKSLSTLSAPHTTQLRQHLGEFPAEQALLERAIVDNPPMLIRDGGVIREGYNSELDEWRGLSEGASDYLVQLEAREKERTGINTLKVGYNRVHGYYIEVSRLQSSQVPLNYQRRQTLKNMERYITPELKEYEEKVLSSQGKALALEKQLWEQLFDLILPKLHELQAFARAAAELDVLSNFAERAETLGYTCPELSQDIGVQIEAGRHPVVERVSQTPFIANPVTLHNQRRMLIVTGPNMGGKSTYMRQVALITLMAHIGCFVPAGRALIGPIDRIFTRIGASDDLASGRSTFMVEMTETANILHNATASSLVLMDEIGRGTSTYDGLSLAWSAAEYLAQQVGAMTLFATHYFELTQLPELMAGVYNVHLDAIEHDDTIAFMHTVQEGAASKSYGLQVAALAGVPNKVIKAAKHKLQQLESRDHQAEGTRTPIQSLLALPEPVENPALTKLSSINPDNLTPKQALDLLYELKRLS.

An ATP-binding site is contributed by 618 to 625 (GPNMGGKS).

The protein belongs to the DNA mismatch repair MutS family.

Its function is as follows. This protein is involved in the repair of mismatches in DNA. It is possible that it carries out the mismatch recognition step. This protein has a weak ATPase activity. The chain is DNA mismatch repair protein MutS from Shewanella baltica (strain OS155 / ATCC BAA-1091).